The primary structure comprises 318 residues: cAMP/cGMP dual specificity phosphodiesterase MT0825 (318 aa).

Asp-21, His-23, and Asp-63 together coordinate Fe cation. AMP contacts are provided by residues His-23, Asp-63, and 97-98 (NH). Residues Asp-63, Asn-97, His-169, and His-207 each contribute to the Mn(2+) site. Residue His-209 participates in Fe cation binding. Residue His-209 participates in AMP binding. The tract at residues 278–318 (PGQARRKIAESGIFIEPSRRDSLFKHPPMVLTSSAPRSPVD) is C-terminal extension.

This sequence belongs to the cyclic nucleotide phosphodiesterase class-III family. In terms of assembly, homodimer. Requires Fe(3+) as cofactor. It depends on Mn(2+) as a cofactor.

It is found in the cytoplasm. The protein localises to the cell membrane. It localises to the secreted. Its subcellular location is the cell wall. The protein resides in the cell envelope. It carries out the reaction a nucleoside 2',3'-cyclic phosphate + H2O = a nucleoside 3'-phosphate + H(+). The enzyme catalyses 2',3'-cyclophospho-AMP + H2O = 3'-AMP + H(+). The catalysed reaction is 2',3'-cyclophospho-GMP + H2O = 3'-GMP + H(+). It catalyses the reaction a nucleoside 3',5'-cyclic phosphate + H2O = a nucleoside 5'-phosphate + H(+). It carries out the reaction 3',5'-cyclic AMP + H2O = AMP + H(+). The enzyme catalyses 3',5'-cyclic GMP + H2O = GMP + H(+). Functionally, cyclic nucleotide phosphodiesterase with a dual-specificity for the second messengers cAMP and cGMP. This is cAMP/cGMP dual specificity phosphodiesterase MT0825 from Mycobacterium tuberculosis (strain CDC 1551 / Oshkosh).